Here is a 428-residue protein sequence, read N- to C-terminus: ORC1-type DNA replication protein 5 (428 aa).

Residues 62-66, Tyr219, and Arg231 each bind ATP; that span reads TGKSL.

It belongs to the CDC6/cdc18 family.

Involved in regulation of DNA replication. The chain is ORC1-type DNA replication protein 5 (orc5) from Halobacterium salinarum (strain ATCC 700922 / JCM 11081 / NRC-1) (Halobacterium halobium).